The chain runs to 1222 residues: ATP-dependent helicase/nuclease subunit A (1222 aa).

The UvrD-like helicase ATP-binding domain maps to 39 to 495 (QKRTAQQIEA…ILLKENFRSQ (457 aa)). 60-67 (ASAGSGKT) contributes to the ATP binding site. The region spanning 524-810 (QLIAGSHAQT…NLMTIHKSKG (287 aa)) is the UvrD-like helicase C-terminal domain.

Belongs to the helicase family. AddA subfamily. Heterodimer of AddA and AddB/RexB. The cofactor is Mg(2+).

The catalysed reaction is Couples ATP hydrolysis with the unwinding of duplex DNA by translocating in the 3'-5' direction.. It catalyses the reaction ATP + H2O = ADP + phosphate + H(+). Functionally, the heterodimer acts as both an ATP-dependent DNA helicase and an ATP-dependent, dual-direction single-stranded exonuclease. Recognizes the chi site generating a DNA molecule suitable for the initiation of homologous recombination. The AddA nuclease domain is required for chi fragment generation; this subunit has the helicase and 3' -&gt; 5' nuclease activities. This Streptococcus pyogenes serotype M28 (strain MGAS6180) protein is ATP-dependent helicase/nuclease subunit A.